Consider the following 506-residue polypeptide: UDP-N-acetylmuramoyl-L-alanyl-D-glutamate--2,6-diaminopimelate ligase (506 aa).

UDP-N-acetyl-alpha-D-muramoyl-L-alanyl-D-glutamate is bound at residue Ser42. Gly125–Thr131 provides a ligand contact to ATP. UDP-N-acetyl-alpha-D-muramoyl-L-alanyl-D-glutamate-binding positions include Thr166–Thr167, Ser193, and Arg201. Lys233 carries the post-translational modification N6-carboxylysine. Meso-2,6-diaminopimelate is bound by residues Arg395, Asp419–Arg422, Gly475, and Glu479. The Meso-diaminopimelate recognition motif motif lies at Asp419–Arg422.

This sequence belongs to the MurCDEF family. MurE subfamily. Mg(2+) serves as cofactor. Carboxylation is probably crucial for Mg(2+) binding and, consequently, for the gamma-phosphate positioning of ATP.

It is found in the cytoplasm. It carries out the reaction UDP-N-acetyl-alpha-D-muramoyl-L-alanyl-D-glutamate + meso-2,6-diaminopimelate + ATP = UDP-N-acetyl-alpha-D-muramoyl-L-alanyl-gamma-D-glutamyl-meso-2,6-diaminopimelate + ADP + phosphate + H(+). Its pathway is cell wall biogenesis; peptidoglycan biosynthesis. Its function is as follows. Catalyzes the addition of meso-diaminopimelic acid to the nucleotide precursor UDP-N-acetylmuramoyl-L-alanyl-D-glutamate (UMAG) in the biosynthesis of bacterial cell-wall peptidoglycan. The sequence is that of UDP-N-acetylmuramoyl-L-alanyl-D-glutamate--2,6-diaminopimelate ligase from Streptomyces avermitilis (strain ATCC 31267 / DSM 46492 / JCM 5070 / NBRC 14893 / NCIMB 12804 / NRRL 8165 / MA-4680).